The chain runs to 480 residues: Glycogen synthase (480 aa).

Lysine 15 provides a ligand contact to ADP-alpha-D-glucose.

Belongs to the glycosyltransferase 1 family. Bacterial/plant glycogen synthase subfamily.

It carries out the reaction [(1-&gt;4)-alpha-D-glucosyl](n) + ADP-alpha-D-glucose = [(1-&gt;4)-alpha-D-glucosyl](n+1) + ADP + H(+). Its pathway is glycan biosynthesis; glycogen biosynthesis. Functionally, synthesizes alpha-1,4-glucan chains using ADP-glucose. The chain is Glycogen synthase from Desulforamulus reducens (strain ATCC BAA-1160 / DSM 100696 / MI-1) (Desulfotomaculum reducens).